Here is a 380-residue protein sequence, read N- to C-terminus: Crotonobetainyl-CoA reductase (380 aa).

The protein belongs to the acyl-CoA dehydrogenase family. As to quaternary structure, homotetramer. FAD is required as a cofactor.

Its subcellular location is the cytoplasm. It catalyses the reaction 4-(trimethylamino)butanoyl-CoA + oxidized [electron-transfer flavoprotein] + H(+) = crotonobetainyl-CoA + reduced [electron-transfer flavoprotein]. It functions in the pathway amine and polyamine metabolism; carnitine metabolism. Functionally, catalyzes the reduction of crotonobetainyl-CoA to gamma-butyrobetainyl-CoA. This is Crotonobetainyl-CoA reductase from Escherichia coli (strain UTI89 / UPEC).